The following is a 433-amino-acid chain: Hps1-dma1 cluster O-methyltransferase (433 aa).

The tract at residues 36–55 (NGHPERSLNSTDSVRLSDAP) is disordered. Asp285 contacts S-adenosyl-L-methionine. His331 (proton acceptor) is an active-site residue.

It belongs to the class I-like SAM-binding methyltransferase superfamily. Cation-independent O-methyltransferase family. COMT subfamily.

It participates in secondary metabolite biosynthesis. O-methyltransferase; part of the hps1-dma1 gene cluster that probably mediates the biosynthesis a derivative of cyclopiazonic acid (CPA). The hybrid polyketide synthase-nonribosomal peptide synthetase (PKS-NRPS) nps1 might incorporates acetyl-CoA, malonyl-CoA, and tryptophan (Trp) and utilizes a C-terminal redox-incompetent reductase domain to make and release the tryptophan tetramic acid, cyclo-acetoacetyl-L-tryptophan (c-AATrp), as the first intermediate in the pathway. In addition, the cluster also includes the tryptophan dimethylallyltransferase dma1, the FAD-dependent oxidoreductase toxD, the cytochrome P450 monooxygenase cyp3.1 and the methyltransferase DOTSEDRAFT_139328; the latter 2 being not present in all CPA-producing fungi but involved in additional modifications that occur in biosynthesis the of a range of CPA and CPA-like products. Further studies are required to clarify whether the CPA-like hps1-dma1 cluster is functional or a non-functional relic reflecting evolution of D.septosporum. This Dothistroma septosporum (strain NZE10 / CBS 128990) (Red band needle blight fungus) protein is Hps1-dma1 cluster O-methyltransferase.